The primary structure comprises 120 residues: Ribosome-binding factor A (120 aa).

It belongs to the RbfA family. Monomer. Binds 30S ribosomal subunits, but not 50S ribosomal subunits or 70S ribosomes.

It localises to the cytoplasm. In terms of biological role, one of several proteins that assist in the late maturation steps of the functional core of the 30S ribosomal subunit. Associates with free 30S ribosomal subunits (but not with 30S subunits that are part of 70S ribosomes or polysomes). Required for efficient processing of 16S rRNA. May interact with the 5'-terminal helix region of 16S rRNA. The polypeptide is Ribosome-binding factor A (Borreliella burgdorferi (strain ATCC 35210 / DSM 4680 / CIP 102532 / B31) (Borrelia burgdorferi)).